Reading from the N-terminus, the 243-residue chain is Bidirectional sugar transporter SWEET2a (243 aa).

Over 1-23 (MDWAAPALTSFVADSSYRHLCCY) the chain is Extracellular. Residues 24–44 (GAGIAGNVFAFVLFISPLPTF) form a helical membrane-spanning segment. Residues 24–111 (GAGIAGNVFA…AVFIAFADAK (88 aa)) enclose the MtN3/slv 1 domain. At 45–57 (KRIVRNGSTEQFS) the chain is on the cytoplasmic side. Residues 58-80 (AMPYIYSLLNCLICMWYGLPFVS) form a helical membrane-spanning segment. The Extracellular segment spans residues 81–89 (YGVVLVATV). The helical transmembrane segment at 90-110 (NSIGAVFQLAYTAVFIAFADA) threads the bilayer. Topologically, residues 111–117 (KQRLKVS) are cytoplasmic. The chain crosses the membrane as a helical span at residues 118 to 138 (ALLAAVFVVFGLIVFVSLALL). At 139–145 (DHPTRQM) the chain is on the extracellular side. A helical transmembrane segment spans residues 146-166 (FVGYLSVASLIFMFASPLSII). The 84-residue stretch at 147–230 (VGYLSVASLI…VLYAYFRKGS (84 aa)) folds into the MtN3/slv 2 domain. At 167-179 (NLVIRTKSVEYMP) the chain is on the cytoplasmic side. Residues 180 to 200 (FYLSLSMFLMSASFFGYGVLL) form a helical membrane-spanning segment. The Extracellular portion of the chain corresponds to 201–202 (ND). Residues 203–223 (FFIYIPNGIGTILGIIQLVLY) traverse the membrane as a helical segment. The Cytoplasmic portion of the chain corresponds to 224 to 243 (AYFRKGSSEEAKLPLLVTHT).

It belongs to the SWEET sugar transporter family. Forms homooligomers and/or heterooligomers.

Its subcellular location is the cell membrane. Mediates both low-affinity uptake and efflux of sugar across the plasma membrane. The polypeptide is Bidirectional sugar transporter SWEET2a (Sorghum bicolor (Sorghum)).